The sequence spans 322 residues: Acetyl-coenzyme A carboxylase carboxyl transferase subunit alpha (322 aa).

The region spanning 30 to 293 (ALDISAEITR…RQALQESLRK (264 aa)) is the CoA carboxyltransferase C-terminal domain.

Belongs to the AccA family. As to quaternary structure, acetyl-CoA carboxylase is a heterohexamer composed of biotin carboxyl carrier protein (AccB), biotin carboxylase (AccC) and two subunits each of ACCase subunit alpha (AccA) and ACCase subunit beta (AccD).

The protein localises to the cytoplasm. The catalysed reaction is N(6)-carboxybiotinyl-L-lysyl-[protein] + acetyl-CoA = N(6)-biotinyl-L-lysyl-[protein] + malonyl-CoA. It functions in the pathway lipid metabolism; malonyl-CoA biosynthesis; malonyl-CoA from acetyl-CoA: step 1/1. Component of the acetyl coenzyme A carboxylase (ACC) complex. First, biotin carboxylase catalyzes the carboxylation of biotin on its carrier protein (BCCP) and then the CO(2) group is transferred by the carboxyltransferase to acetyl-CoA to form malonyl-CoA. The polypeptide is Acetyl-coenzyme A carboxylase carboxyl transferase subunit alpha (Nitrosomonas eutropha (strain DSM 101675 / C91 / Nm57)).